Reading from the N-terminus, the 271-residue chain is Thiazole synthase (271 aa).

The active-site Schiff-base intermediate with DXP is the lysine 95. 1-deoxy-D-xylulose 5-phosphate is bound by residues glycine 156, 182-183 (AG), and 204-205 (NT).

It belongs to the ThiG family. Homotetramer. Forms heterodimers with either ThiH or ThiS.

It localises to the cytoplasm. It catalyses the reaction [ThiS sulfur-carrier protein]-C-terminal-Gly-aminoethanethioate + 2-iminoacetate + 1-deoxy-D-xylulose 5-phosphate = [ThiS sulfur-carrier protein]-C-terminal Gly-Gly + 2-[(2R,5Z)-2-carboxy-4-methylthiazol-5(2H)-ylidene]ethyl phosphate + 2 H2O + H(+). It functions in the pathway cofactor biosynthesis; thiamine diphosphate biosynthesis. Catalyzes the rearrangement of 1-deoxy-D-xylulose 5-phosphate (DXP) to produce the thiazole phosphate moiety of thiamine. Sulfur is provided by the thiocarboxylate moiety of the carrier protein ThiS. In vitro, sulfur can be provided by H(2)S. This Yersinia pestis protein is Thiazole synthase.